Consider the following 57-residue polypeptide: Large ribosomal subunit protein bL32c (57 aa).

This sequence belongs to the bacterial ribosomal protein bL32 family.

The protein resides in the plastid. It is found in the chloroplast. This chain is Large ribosomal subunit protein bL32c, found in Phalaenopsis aphrodite subsp. formosana (Moth orchid).